Reading from the N-terminus, the 335-residue chain is Fructose-1,6-bisphosphatase class 1 1 (335 aa).

E92, D114, L116, and D117 together coordinate Mg(2+). Residues 117 to 120, N209, and K275 contribute to the substrate site; that span reads DGSS. Residue E281 participates in Mg(2+) binding.

Belongs to the FBPase class 1 family. In terms of assembly, homotetramer. It depends on Mg(2+) as a cofactor.

It localises to the cytoplasm. It catalyses the reaction beta-D-fructose 1,6-bisphosphate + H2O = beta-D-fructose 6-phosphate + phosphate. It functions in the pathway carbohydrate biosynthesis; gluconeogenesis. The polypeptide is Fructose-1,6-bisphosphatase class 1 1 (Polaromonas naphthalenivorans (strain CJ2)).